The primary structure comprises 579 residues: Thiol:disulfide interchange protein DsbD (579 aa).

Residues 1–16 (MKKLFLFFTLIFTAFA) form the signal peptide. 2 disulfides stabilise this stretch: Cys124–Cys129 and Cys193–Cys315. Helical transmembrane passes span 178 to 198 (IFGFFLLGLGLAFTPCVLPML), 230 to 250 (LTYTLLGLAVAAIGLPFQIAL), 254 to 274 (YVMIGLSILFVALALSMFGLF), 296 to 316 (GAFGGAFAMGMIAGLVASPCT), 337 to 357 (AATLYLLALGMGVPLMLITLF), 376 to 396 (FGFVMLALPVFLLSRILPEVW), 397 to 417 (EPRLWAGLATVFFIWFALQMS), and 420 to 440 (GFGYAIKIISFALAMVTVQPL). One can recognise a Thioredoxin domain in the interval 449–579 (TTTQSAVENM…AFSNWLKALH (131 aa)). Cys495 and Cys498 are disulfide-bonded.

The protein belongs to the thioredoxin family. DsbD subfamily.

The protein localises to the cell inner membrane. The enzyme catalyses [protein]-dithiol + NAD(+) = [protein]-disulfide + NADH + H(+). It carries out the reaction [protein]-dithiol + NADP(+) = [protein]-disulfide + NADPH + H(+). In terms of biological role, required to facilitate the formation of correct disulfide bonds in some periplasmic proteins and for the assembly of the periplasmic c-type cytochromes. Acts by transferring electrons from cytoplasmic thioredoxin to the periplasm. This transfer involves a cascade of disulfide bond formation and reduction steps. The sequence is that of Thiol:disulfide interchange protein DsbD from Haemophilus influenzae (strain 86-028NP).